The sequence spans 351 residues: Dihydroorotate dehydrogenase (quinone) (351 aa).

FMN-binding positions include 61–65 (AGLDK) and threonine 85. Position 65 (lysine 65) interacts with substrate. 110 to 114 (NRMGF) lines the substrate pocket. The FMN site is built by asparagine 139 and asparagine 172. Asparagine 172 provides a ligand contact to substrate. Serine 175 acts as the Nucleophile in catalysis. Asparagine 177 is a substrate binding site. Residues lysine 217 and threonine 245 each coordinate FMN. 246-247 (NT) lines the substrate pocket. FMN contacts are provided by residues glycine 268, glycine 297, and 318–319 (YS).

It belongs to the dihydroorotate dehydrogenase family. Type 2 subfamily. In terms of assembly, monomer. It depends on FMN as a cofactor.

It is found in the cell membrane. It catalyses the reaction (S)-dihydroorotate + a quinone = orotate + a quinol. It functions in the pathway pyrimidine metabolism; UMP biosynthesis via de novo pathway; orotate from (S)-dihydroorotate (quinone route): step 1/1. Catalyzes the conversion of dihydroorotate to orotate with quinone as electron acceptor. The sequence is that of Dihydroorotate dehydrogenase (quinone) from Xanthomonas euvesicatoria pv. vesicatoria (strain 85-10) (Xanthomonas campestris pv. vesicatoria).